The primary structure comprises 118 residues: Large ribosomal subunit protein bL19 (118 aa).

The protein belongs to the bacterial ribosomal protein bL19 family.

Its function is as follows. This protein is located at the 30S-50S ribosomal subunit interface and may play a role in the structure and function of the aminoacyl-tRNA binding site. The protein is Large ribosomal subunit protein bL19 of Alcanivorax borkumensis (strain ATCC 700651 / DSM 11573 / NCIMB 13689 / SK2).